A 130-amino-acid polypeptide reads, in one-letter code: Small ribosomal subunit protein uS9 (130 aa).

This sequence belongs to the universal ribosomal protein uS9 family.

The sequence is that of Small ribosomal subunit protein uS9 from Leptothrix cholodnii (strain ATCC 51168 / LMG 8142 / SP-6) (Leptothrix discophora (strain SP-6)).